A 72-amino-acid chain; its full sequence is VIP peptides (72 aa).

Residue isoleucine 27 is modified to Isoleucine amide. Position 72 is an asparagine amide (asparagine 72).

This sequence belongs to the glucagon family.

It is found in the secreted. In terms of biological role, VIP is a neuropeptide involved in a diverse array of physiological processes through activating the PACAP subfamily of class B1 G protein-coupled receptors: VIP receptor 1 (VPR1) and VIP receptor 2 (VPR2). Abundantly expressed throughout the CNS and peripheral nervous systems where they primarily exert neuroprotective and immune modulatory roles. Also causes vasodilation, lowers arterial blood pressure, stimulates myocardial contractility, increases glycogenolysis and relaxes the smooth muscle of trachea, stomach and gall bladder. Functionally, PHM-27 is a bioactive form from proteolysis of the same precursor protein, that causes vasodilation. It is a potent agonist of the calcitonin receptor CALCR, with similar efficacy as calcitonin. The protein is VIP peptides (VIP) of Oryctolagus cuniculus (Rabbit).